The chain runs to 409 residues: Peptidase T (409 aa).

H78 contacts Zn(2+). The active site involves D80. D140 is a binding site for Zn(2+). Residue E173 is the Proton acceptor of the active site. E174, D196, and H379 together coordinate Zn(2+).

Belongs to the peptidase M20B family. Zn(2+) serves as cofactor.

Its subcellular location is the cytoplasm. The catalysed reaction is Release of the N-terminal residue from a tripeptide.. In terms of biological role, cleaves the N-terminal amino acid of tripeptides. The sequence is that of Peptidase T from Serratia proteamaculans (strain 568).